The sequence spans 193 residues: Epididymal-specific lipocalin-12 (193 aa).

A signal peptide spans 1 to 19; that stretch reads MGPWWALWLILTLPQILES. Cysteine 88 and cysteine 193 are oxidised to a cystine. Residues asparagine 143 and asparagine 172 are each glycosylated (N-linked (GlcNAc...) asparagine).

This sequence belongs to the calycin superfamily. Lipocalin family. As to quaternary structure, monomer. As to expression, expressed in epididymis.

It localises to the secreted. Binds all-trans retinoic acid and may act as a retinoid carrier protein within the epididymis. May play a role in male fertility. The chain is Epididymal-specific lipocalin-12 (Lcn12) from Mus musculus (Mouse).